The chain runs to 79 residues: UPF0180 protein BCB4264_A1446 (79 aa).

It belongs to the UPF0180 family.

This chain is UPF0180 protein BCB4264_A1446, found in Bacillus cereus (strain B4264).